A 409-amino-acid chain; its full sequence is Inner membrane transport protein YqeG (409 aa).

The Periplasmic portion of the chain corresponds to 1 to 25 (MSNIWSKEETLWSFALYGTAVGAGT). Residues 26–46 (LFLPIQLGSAGAVVLFITALV) form a helical membrane-spanning segment. The Cytoplasmic portion of the chain corresponds to 47–87 (AWPLTYWPHKALCQFILSSKTSAGEGITGAVTHYYGKKIGN). Residues 88-108 (LITTLYFIAFFVVVLIYAVAI) form a helical membrane-spanning segment. The Periplasmic segment spans residues 109-127 (TNSLTEQLAKHMVIDLRIR). The chain crosses the membrane as a helical span at residues 128-148 (MLVSLGVVLILNLIFLMGRHA). At 149–151 (TIR) the chain is on the cytoplasmic side. A helical transmembrane segment spans residues 152–172 (VMGFLVFPLIAYFLFLSIYLV). At 173–193 (GSWQPDLLTTQVEFNQNTLHQ) the chain is on the periplasmic side. The helical transmembrane segment at 194 to 214 (IWISIPVMVFAFSHTPIISTF) threads the bilayer. Over 215 to 235 (AIDRREKYGEHAMDKCKKIMK) the chain is Cytoplasmic. The helical transmembrane segment at 236 to 256 (VAYLIICISVLFFVFSCLLSI) threads the bilayer. The Periplasmic segment spans residues 257–276 (PPSYIEAAKEEGVTILSALS). A helical transmembrane segment spans residues 277-297 (MLPNAPAWLSISGIIVAVVAM). Topologically, residues 298 to 329 (SKSFLGTYFGVIEGATEVVKTTLQQVGVKKSR) are cytoplasmic. A helical transmembrane segment spans residues 330–350 (AFNRALSIMLVSLITFIVCCI). Topologically, residues 351-353 (NPN) are periplasmic. Residues 354–374 (AISMIYAISGPLIAMILFIMP) traverse the membrane as a helical segment. Residues 375-388 (TLSTYLIPALKPWR) lie on the Cytoplasmic side of the membrane. Residues 389-409 (SIGNLITLIVGILCVSVMFFS) traverse the membrane as a helical segment.

This sequence belongs to the amino acid/polyamine transporter 2 family. SdaC/TdcC subfamily.

It localises to the cell inner membrane. The chain is Inner membrane transport protein YqeG (yqeG) from Escherichia coli O6:H1 (strain CFT073 / ATCC 700928 / UPEC).